Here is a 162-residue protein sequence, read N- to C-terminus: 3-dehydroquinate dehydratase (162 aa).

Tyr-22 (proton acceptor) is an active-site residue. Substrate-binding residues include Asn-73, His-79, and Asp-86. His-99 functions as the Proton donor in the catalytic mechanism. Substrate contacts are provided by residues 100 to 101 (LS) and Arg-110.

This sequence belongs to the type-II 3-dehydroquinase family. As to quaternary structure, homododecamer.

It carries out the reaction 3-dehydroquinate = 3-dehydroshikimate + H2O. It functions in the pathway metabolic intermediate biosynthesis; chorismate biosynthesis; chorismate from D-erythrose 4-phosphate and phosphoenolpyruvate: step 3/7. Its function is as follows. Catalyzes a trans-dehydration via an enolate intermediate. This Sulfurovum sp. (strain NBC37-1) protein is 3-dehydroquinate dehydratase.